The chain runs to 274 residues: Diaminopimelate epimerase (274 aa).

Residues asparagine 13, glutamine 47, and asparagine 65 each contribute to the substrate site. Cysteine 74 acts as the Proton donor in catalysis. Substrate-binding positions include 75-76 (GN), asparagine 149, asparagine 182, and 200-201 (ER). Residue cysteine 209 is the Proton acceptor of the active site. Residue 210–211 (GT) participates in substrate binding.

Belongs to the diaminopimelate epimerase family. In terms of assembly, homodimer.

The protein resides in the cytoplasm. It carries out the reaction (2S,6S)-2,6-diaminopimelate = meso-2,6-diaminopimelate. It functions in the pathway amino-acid biosynthesis; L-lysine biosynthesis via DAP pathway; DL-2,6-diaminopimelate from LL-2,6-diaminopimelate: step 1/1. Functionally, catalyzes the stereoinversion of LL-2,6-diaminopimelate (L,L-DAP) to meso-diaminopimelate (meso-DAP), a precursor of L-lysine and an essential component of the bacterial peptidoglycan. The chain is Diaminopimelate epimerase from Rhizorhabdus wittichii (strain DSM 6014 / CCUG 31198 / JCM 15750 / NBRC 105917 / EY 4224 / RW1) (Sphingomonas wittichii).